Consider the following 379-residue polypeptide: Transcription termination factor Rho (379 aa).

Positions 1 to 68 (MTDKYGFLRS…KRIFQINGRF (68 aa)) constitute a Rho RNA-BD domain. Residues 111–116 (GKGQRG), 123–128 (KTGKTT), and Arg-154 contribute to the ATP site.

The protein belongs to the Rho family. As to quaternary structure, homohexamer. The homohexamer assembles into an open ring structure.

Its function is as follows. Facilitates transcription termination by a mechanism that involves Rho binding to the nascent RNA, activation of Rho's RNA-dependent ATPase activity, and release of the mRNA from the DNA template. This chain is Transcription termination factor Rho, found in Karelsulcia muelleri (strain SMDSEM) (Sulcia muelleri).